Here is a 621-residue protein sequence, read N- to C-terminus: MBT domain-containing protein 1 (621 aa).

The span at 1–21 (MEKTKDPADRSSRSERKRRDS) shows a compositional bias: basic and acidic residues. Residues 1 to 55 (MEKTKDPADRSSRSERKRRDSFGMFDGYDSCSEDTSSSSSSDESEEEVAPLPSSL) are disordered. Over residues 29-41 (DSCSEDTSSSSSS) the composition is skewed to low complexity. An FCS-type zinc finger spans residues 68 to 103 (PDGKSGMATCEMCGMVGVRDAFYSKTKRFCSVSCSR). 4 residues coordinate Zn(2+): Cys-77, Cys-80, Cys-97, and Cys-101. MBT repeat units lie at residues 164–268 (FSWG…LVPP), 276–373 (TNWK…IGHR), 374–479 (FKRT…LTPP), and 487–583 (FKWF…LQPP). The segment at 581–621 (QPPAPQSNKDGQSNVSKQKKKSKSQPYKGHKKNFRKPGNRP) is disordered. Positions 597–621 (KQKKKSKSQPYKGHKKNFRKPGNRP) are enriched in basic residues.

As to quaternary structure, monomer. Component of the NuA4 histone acetyltransferase complex.

The protein localises to the nucleus. It localises to the chromosome. Its function is as follows. Chromatin reader component of the NuA4 histone acetyltransferase complex, a multiprotein complex involved in transcriptional activation of select genes principally by acetylation of nucleosomal histones H4 and H2A. The NuA4 complex plays a direct role in repair of DNA double-strand breaks (DSBs) by promoting homologous recombination (HR). MBTD1 specifically recognizes and binds monomethylated and dimethylated 'Lys-20' on histone H4 (H4K20me1 and H4K20me2, respectively). In the NuA4 complex, MBTD1 promotes recruitment of the complex to H4K20me marks by competing with TP53BP1 for binding to H4K20me. Following recruitment to H4K20me at DNA breaks, the NuA4 complex catalyzes acetylation of 'Lys-15' on histone H2A (H2AK15), blocking the ubiquitination mark required for TP53BP1 localization at DNA breaks, thereby promoting homologous recombination (HR). This chain is MBT domain-containing protein 1, found in Xenopus laevis (African clawed frog).